Reading from the N-terminus, the 273-residue chain is Thiazole synthase (273 aa).

The Schiff-base intermediate with DXP role is filled by K110. 1-deoxy-D-xylulose 5-phosphate contacts are provided by residues G171, 197 to 198 (AG), and 219 to 220 (NT). The disordered stretch occupies residues 251–273 (MAAQDSAQPSTPVLGTPFWHHAP).

It belongs to the ThiG family. As to quaternary structure, homotetramer. Forms heterodimers with either ThiH or ThiS.

It localises to the cytoplasm. It carries out the reaction [ThiS sulfur-carrier protein]-C-terminal-Gly-aminoethanethioate + 2-iminoacetate + 1-deoxy-D-xylulose 5-phosphate = [ThiS sulfur-carrier protein]-C-terminal Gly-Gly + 2-[(2R,5Z)-2-carboxy-4-methylthiazol-5(2H)-ylidene]ethyl phosphate + 2 H2O + H(+). It functions in the pathway cofactor biosynthesis; thiamine diphosphate biosynthesis. Its function is as follows. Catalyzes the rearrangement of 1-deoxy-D-xylulose 5-phosphate (DXP) to produce the thiazole phosphate moiety of thiamine. Sulfur is provided by the thiocarboxylate moiety of the carrier protein ThiS. In vitro, sulfur can be provided by H(2)S. In Variovorax paradoxus (strain S110), this protein is Thiazole synthase.